Reading from the N-terminus, the 567-residue chain is Arginine--tRNA ligase (567 aa).

The short motif at 121–131 (ANPNGPLHVGH) is the 'HIGH' region element.

It belongs to the class-I aminoacyl-tRNA synthetase family.

It localises to the cytoplasm. The enzyme catalyses tRNA(Arg) + L-arginine + ATP = L-arginyl-tRNA(Arg) + AMP + diphosphate. This chain is Arginine--tRNA ligase, found in Methanococcoides burtonii (strain DSM 6242 / NBRC 107633 / OCM 468 / ACE-M).